A 704-amino-acid polypeptide reads, in one-letter code: Elongation factor G (704 aa).

The tr-type G domain maps to 8 to 290; that stretch reads ARYRNIGISA…AVVDYLPSPV (283 aa). GTP-binding positions include 17-24, 88-92, and 142-145; these read AHIDAGKT, DTPGH, and NKMD.

This sequence belongs to the TRAFAC class translation factor GTPase superfamily. Classic translation factor GTPase family. EF-G/EF-2 subfamily.

It localises to the cytoplasm. Its function is as follows. Catalyzes the GTP-dependent ribosomal translocation step during translation elongation. During this step, the ribosome changes from the pre-translocational (PRE) to the post-translocational (POST) state as the newly formed A-site-bound peptidyl-tRNA and P-site-bound deacylated tRNA move to the P and E sites, respectively. Catalyzes the coordinated movement of the two tRNA molecules, the mRNA and conformational changes in the ribosome. The sequence is that of Elongation factor G from Pectobacterium carotovorum subsp. carotovorum (strain PC1).